The chain runs to 286 residues: uncharacterized protein (286 aa).

4 disordered regions span residues 1–38 (MSQKKKASLSKIHTGMNSSSKQVLSSTSSANEKTEDDV), 108–146 (HTGELSNNGAERGKIRGSTRATRKGSVNKSKSGRTRRHK), 196–227 (RTQKSSSEEGEGEFSGRGDPAPLEVGDSKTRL), and 241–286 (DVDD…PRSS). Residues 18 to 29 (SSSKQVLSSTSS) are compositionally biased toward low complexity. Residues 243-268 (DDQKKDGSGEEKKEKKSAEKEKKISH) are compositionally biased toward basic and acidic residues. The span at 269–278 (ENVQSLSPSS) shows a compositional bias: polar residues.

This is an uncharacterized protein from Caenorhabditis elegans.